Reading from the N-terminus, the 416-residue chain is Probable intermembrane transport protein HI_1671 (416 aa).

8 helical membrane passes run 62–82 (ILIL…LLGI), 107–127 (IFIC…MLWL), 138–158 (VLLF…LVAL), 172–192 (EINI…LLFI), 263–283 (LIAG…GIYL), 306–326 (FVAF…IFIM), 347–367 (LLHL…VLAL), and 377–397 (IINF…FCTM).

Belongs to the PqiA family.

Its subcellular location is the cell inner membrane. This chain is Probable intermembrane transport protein HI_1671, found in Haemophilus influenzae (strain ATCC 51907 / DSM 11121 / KW20 / Rd).